The chain runs to 531 residues: MAPADVPASLPLGLCLLLASGFGHAGKLLVVPMDGSHWFTMQMVVEKLLPKGHEVVVVVPEVSWQLGKPLNFTVKTYSVSHTQEDLNREFKFFIDSQWKTQQESGVLPLLTSPAQGFFELLFSHCRSLFKDKKLVEYLKQSSFDAVFLDPFDVCGLTVAKYFSLPSVVFSRGIFCHYLEEGSQCPSPPSYVPRPILKLTDTMTFKERVWNLLSYMGEHAFCPSFFKTATDIASEVLQTPVTMTDLFSPVSVWLLRTDFTLELPRPVMPNVIHIGGINCHQRKPVSKEFEAYVNASGEHGIVVFSLGSMVSEIPEKKAMEIAEALGRIPQTLLWRYTGTRPSNLAKNTILVKWLPQNDLLGHPKARAFITHSGSHGIYEGICNGVPMVMMPLFGDQMDNAKRMETRGAGVTLNVLEMTADDLENALKTVINNKSYKENIMRLSSLHKDRPIEPLDLAVFWVEYVMRHKGAPHLRPAAHDLTWYQYHSLDVIGFLLAIVLTVVFIVYKSCAYGCRKCFGGKGRVKKSHKSKTH.

A signal peptide spans M1 to A25. N-linked (GlcNAc...) asparagine glycans are attached at residues N71, N293, and N431. Residues L487–I503 traverse the membrane as a helical segment.

It belongs to the UDP-glycosyltransferase family. In terms of assembly, homodimer. Homooligomer. Interacts with UGT1A1, UGT1A3, UGT1A4, UGT1A6, UGT1A8, UGT1A9 and UGT1A10 to form heterodimers.

The protein localises to the endoplasmic reticulum membrane. The enzyme catalyses glucuronate acceptor + UDP-alpha-D-glucuronate = acceptor beta-D-glucuronoside + UDP + H(+). It carries out the reaction 17alpha-estradiol + UDP-alpha-D-glucuronate = 17alpha-estradiol 3-O-(beta-D-glucuronate) + UDP + H(+). It catalyses the reaction prunetin + UDP-alpha-D-glucuronate = prunetin-5-O-beta-D-glucuronide + UDP. The catalysed reaction is 5-epi-5-F2t-IsoP + UDP-alpha-D-glucuronate = 5-epi-5-F2t-IsoP-glucuronide + UDP + H(+). The enzyme catalyses (E)-ferulate + UDP-alpha-D-glucuronate = (E)-ferulic acid beta-D-glucuronate ester + UDP. It carries out the reaction candesartan + UDP-alpha-D-glucuronate = candesartan O-beta-D-glucuronoside + UDP. It catalyses the reaction SN-38 + UDP-alpha-D-glucuronate = SN-38 O-beta-D-glucuronide + UDP + H(+). The catalysed reaction is mycophenolate + UDP-alpha-D-glucuronate = mycophenolate 7-O-beta-D-glucuronide + UDP + H(+). Functionally, UDP-glucuronosyltransferase (UGT) that catalyzes phase II biotransformation reactions in which lipophilic substrates are conjugated with glucuronic acid to increase the metabolite's water solubility, thereby facilitating excretion into either the urine or bile. Essential for the elimination and detoxification of drugs, xenobiotics and endogenous compounds. Catalyzes the glucuronidation of endogenous estrogen hormone epiestradiol. Involved in the glucuronidation of F2-isoprostane (5-epi-5-F2t-IsoP). Involved in the glucuronidation of the phytochemical ferulic acid at the carboxylic acid group. Also catalyzes the glucuronidation of the isoflavones genistein, daidzein, glycitein, formononetin, biochanin A and prunetin, which are phytoestrogens with anticancer and cardiovascular properties. Involved in the glucuronidation of the AGTR1 angiotensin receptor antagonist caderastan, a drug which can inhibit the effect of angiotensin II. Involved in the biotransformation of 7-ethyl-10-hydroxycamptothecin (SN-38), the pharmacologically active metabolite of the anticancer drug irinotecan. Also metabolizes mycophenolate, an immunosuppressive agent. The sequence is that of UDP-glucuronosyltransferase 1A7 from Rattus norvegicus (Rat).